The following is a 78-amino-acid chain: Conotoxin Cl14.9 (78 aa).

Residues 1–22 (MTAKATLLVLALVVMATSGVSS) form the signal peptide. A propeptide spanning residues 23–47 (ASVAGGPVVNSDTVSRSDPERLSTR) is cleaved from the precursor. Ile70 bears the Isoleucine amide mark. Positions 74 to 78 (DITQQ) are excised as a propeptide.

In terms of processing, contains 2 disulfide bonds. Expressed by the venom duct.

It is found in the secreted. This chain is Conotoxin Cl14.9, found in Californiconus californicus (California cone).